Reading from the N-terminus, the 291-residue chain is Phosphate import ATP-binding protein PstB (291 aa).

Positions Met-1–Gln-17 are enriched in basic and acidic residues. Residues Met-1–Asn-40 are disordered. Polar residues predominate over residues Ser-18–Asn-29. The span at Glu-30 to Asn-40 shows a compositional bias: basic and acidic residues. Positions Tyr-45–Ile-286 constitute an ABC transporter domain. Gly-77–Ser-84 is an ATP binding site.

The protein belongs to the ABC transporter superfamily. Phosphate importer (TC 3.A.1.7) family. The complex is composed of two ATP-binding proteins (PstB), two transmembrane proteins (PstC and PstA) and a solute-binding protein (PstS).

The protein resides in the cell membrane. The enzyme catalyses phosphate(out) + ATP + H2O = ADP + 2 phosphate(in) + H(+). In terms of biological role, part of the ABC transporter complex PstSACB involved in phosphate import. Responsible for energy coupling to the transport system. This chain is Phosphate import ATP-binding protein PstB, found in Staphylococcus haemolyticus (strain JCSC1435).